The following is a 495-amino-acid chain: Tripartite motif-containing protein 5 (495 aa).

Ala2 is modified (N-acetylalanine). The RING-type zinc finger occupies Cys15–Arg60. Position 87 is a phosphoserine (Ser87). Residues Gln92–Met133 form a B box-type zinc finger. Zn(2+) is bound by residues Cys97, His100, Cys119, and His125. A coiled-coil region spans residues Ala137–Met223. The tract at residues Phe187–Asn200 is required for interaction with GABARAP and for autophagy. The 213-residue stretch at Leu283 to Ser495 folds into the B30.2/SPRY domain.

The protein belongs to the TRIM/RBCC family. In terms of assembly, can form homodimers and homotrimers. In addition to lower-order dimerization, also exhibits a higher-order multimerization and both low- and high-order multimerizations are essential for its restriction activity. Interacts with BTBD1 and BTBD2. Interacts with PSMC4, PSMC5, PSMD7 and HSPA8/HSC70. Interacts (via B30.2/SPRY domain) with HSPA1A/B. Interacts with PSMC2, MAP3K7/TAK1, TAB2 and TAB3. Interacts with SQSTM1. Interacts with TRIM6 and TRIM34. Interacts with ULK1 (phosphorylated form), GABARAP, GABARAPL1, GABARAPL2, MAP1LC3A, MAP1LC3C and BECN1. Degraded in a proteasome-independent fashion in the absence of viral infection but in a proteasome-dependent fashion following exposure to restriction sensitive virus. Post-translationally, autoubiquitinated in a RING finger- and UBE2D2-dependent manner. Monoubiquitinated by TRIM21. Deubiquitinated by Yersinia YopJ. Ubiquitination may not lead to proteasomal degradation.

Its subcellular location is the cytoplasm. The protein localises to the nucleus. The enzyme catalyses S-ubiquitinyl-[E2 ubiquitin-conjugating enzyme]-L-cysteine + [acceptor protein]-L-lysine = [E2 ubiquitin-conjugating enzyme]-L-cysteine + N(6)-ubiquitinyl-[acceptor protein]-L-lysine.. It functions in the pathway protein modification; protein ubiquitination. In terms of biological role, capsid-specific restriction factor that prevents infection from non-host-adapted retroviruses. Blocks viral replication early in the life cycle, after viral entry but before reverse transcription. In addition to acting as a capsid-specific restriction factor, also acts as a pattern recognition receptor that activates innate immune signaling in response to the retroviral capsid lattice. Binding to the viral capsid triggers its E3 ubiquitin ligase activity, and in concert with the heterodimeric ubiquitin conjugating enzyme complex UBE2V1-UBE2N (also known as UBC13-UEV1A complex) generates 'Lys-63'-linked polyubiquitin chains, which in turn are catalysts in the autophosphorylation of the MAP3K7/TAK1 complex (includes TAK1, TAB2, and TAB3). Activation of the MAP3K7/TAK1 complex by autophosphorylation results in the induction and expression of NF-kappa-B and MAPK-responsive inflammatory genes, thereby leading to an innate immune response in the infected cell. Plays a role in regulating autophagy through activation of autophagy regulator BECN1 by causing its dissociation from its inhibitors BCL2 and TAB2. This chain is Tripartite motif-containing protein 5 (TRIM5), found in Macaca nemestrina (Pig-tailed macaque).